The primary structure comprises 1899 residues: Protocadherin-15 (1899 aa).

The first 26 residues, 1–26 (MLQQFCLWKWLAVGIAVATILASSLA), serve as a signal peptide directing secretion. Topologically, residues 27-1376 (QNDEDCKLAR…AQAVGYTEGA (1350 aa)) are extracellular. Residues Cys-32 and Cys-120 are joined by a disulfide bond. Cadherin domains lie at 38–147 (GPPA…SPQF), 148–265 (QQQR…GPMF), 278–395 (RPLT…KPYF), 396–509 (TKST…SPTF), 510–616 (SNIS…PPRF), 617–717 (PQLM…GPVF), 719–819 (MFLP…SPVF), 820–926 (TNAS…SPVF), 927–1035 (SKTL…IPRF), 1037–1144 (QDEY…APVF), and 1145–1259 (TKKM…PPTL). Residues 1377–1397 (LLALAVIIILCCMPAILIVMV) form a helical membrane-spanning segment. At 1398–1899 (SYRQRQAECA…KRFPSQSTAL (502 aa)) the chain is on the cytoplasmic side. Disordered regions lie at residues 1668-1687 (SPCLRSSPLSSPTPCEVVEP), 1700-1721 (HDYPEELSPPPTRKPTPPSFRI), and 1734-1820 (TKGE…RREL). Composition is skewed to pro residues over residues 1706–1717 (LSPPPTRKPTPP) and 1743–1773 (PDPPKTPPPPPPLLPPPPPSPPLLPPHPPTL). Low complexity predominate over residues 1774–1791 (PLASVPSSSSLPSTQHLS). Residues 1804-1814 (AVPPPAAVPEP) are compositionally biased toward pro residues.

As to expression, in the utricle, localizes to the distal region of the kinocilium and near the tips of the stereocilia.

The protein resides in the cell membrane. Functionally, calcium-dependent cell-adhesion protein. Required for inner ear neuroepithelial cell elaboration and cochlear function. Probably involved in the maintenance of normal retinal function. The chain is Protocadherin-15 (Pcdh15) from Gallus gallus (Chicken).